Consider the following 256-residue polypeptide: Major prion protein (256 aa).

The signal sequence occupies residues 1 to 24 (MVKSHIGSWILVLFVAMWSDVGLC). The interval 25–41 (KKRPKPGGGWNTGGSRY) is interaction with ADGRG6. Residues 25-233 (KKRPKPGGGW…ESEAYYQRRA (209 aa)) form an interaction with GRB2, ERI3 and SYN1 region. The tract at residues 28–110 (PKPGGGWNTG…QWNKPSKPKT (83 aa)) is disordered. 5 tandem repeats follow at residues 54-62 (PQGGGGWGQ), 63-70 (PHGGGWGQ), 71-78 (PHGGGWGQ), 79-86 (PHGGGWGQ), and 87-95 (PHGGGGWGQ). The 5 X 8 AA tandem repeats of P-H-G-G-G-W-G-Q stretch occupies residues 54-95 (PQGGGGWGQPHGGGWGQPHGGGWGQPHGGGWGQPHGGGGWGQ). Residues 55–97 (QGGGGWGQPHGGGWGQPHGGGWGQPHGGGWGQPHGGGGWGQGG) show a composition bias toward gly residues. 12 residues coordinate Cu(2+): His64, Gly65, Gly66, His72, Gly73, Gly74, His80, Gly81, Gly82, His88, Gly90, and Gly91. Cys182 and Cys217 are joined by a disulfide. N-linked (GlcNAc...) asparagine glycans are attached at residues Asn184 and Asn200. Ala233 carries the GPI-anchor amidated alanine lipid modification. Positions 234–256 (SAILFSSPPVILLISFLIFLIVG) are cleaved as a propeptide — removed in mature form.

It belongs to the prion family. As to quaternary structure, monomer and homodimer. Has a tendency to aggregate into amyloid fibrils containing a cross-beta spine, formed by a steric zipper of superposed beta-strands. Soluble oligomers may represent an intermediate stage on the path to fibril formation. Copper binding may promote oligomerization. Interacts with GRB2, APP, ERI3/PRNPIP and SYN1. Mislocalized cytosolically exposed PrP interacts with MGRN1; this interaction alters MGRN1 subcellular location and causes lysosomal enlargement. Interacts with APP. Interacts with KIAA1191. Interacts with ADGRG6.

Its subcellular location is the cell membrane. The protein localises to the golgi apparatus. Functionally, its primary physiological function is unclear. May play a role in neuronal development and synaptic plasticity. May be required for neuronal myelin sheath maintenance. May promote myelin homeostasis through acting as an agonist for ADGRG6 receptor. May play a role in iron uptake and iron homeostasis. Soluble oligomers are toxic to cultured neuroblastoma cells and induce apoptosis (in vitro). Association with GPC1 (via its heparan sulfate chains) targets PRNP to lipid rafts. Also provides Cu(2+) or Zn(2+) for the ascorbate-mediated GPC1 deaminase degradation of its heparan sulfate side chains. The polypeptide is Major prion protein (PRNP) (Felis catus (Cat)).